The sequence spans 91 residues: uncharacterized protein (91 aa).

This is an uncharacterized protein from Bacillus anthracis.